We begin with the raw amino-acid sequence, 323 residues long: Digestive cysteine proteinase 2 (323 aa).

The first 16 residues, 1–16, serve as a signal peptide directing secretion; it reads MKVAVLFLCGVALAAA. Positions 17-107 are cleaved as a propeptide — activation peptide; the sequence is SPSWEHFKGK…FYPKKETGPQ (91 aa). 3 disulfide bridges follow: Cys-128–Cys-171, Cys-162–Cys-204, and Cys-263–Cys-312. Residue Cys-131 is part of the active site. Catalysis depends on residues His-270 and Asn-290.

This sequence belongs to the peptidase C1 family.

Its activity is regulated as follows. Inhibited by E-64, antipain, leupeptin, heavy metal ions, iodoacetic acid, dithionitrobenzene, p-hydroxymercuri-benzoate; activated by mercaptoethanol and dithiothreitol. The polypeptide is Digestive cysteine proteinase 2 (LCP2) (Homarus americanus (American lobster)).